Consider the following 139-residue polypeptide: D-ribose pyranase (139 aa).

His-20 functions as the Proton donor in the catalytic mechanism. Substrate-binding positions include Asp-28, His-106, and 128–130; that span reads YAN.

The protein belongs to the RbsD / FucU family. RbsD subfamily. As to quaternary structure, homodecamer.

It is found in the cytoplasm. It catalyses the reaction beta-D-ribopyranose = beta-D-ribofuranose. The protein operates within carbohydrate metabolism; D-ribose degradation; D-ribose 5-phosphate from beta-D-ribopyranose: step 1/2. Catalyzes the interconversion of beta-pyran and beta-furan forms of D-ribose. The chain is D-ribose pyranase from Aliivibrio fischeri (strain ATCC 700601 / ES114) (Vibrio fischeri).